We begin with the raw amino-acid sequence, 268 residues long: Ribosomal RNA small subunit methyltransferase A (268 aa).

Positions 19, 21, 46, 67, 92, and 113 each coordinate S-adenosyl-L-methionine.

It belongs to the class I-like SAM-binding methyltransferase superfamily. rRNA adenine N(6)-methyltransferase family. RsmA subfamily.

It is found in the cytoplasm. It catalyses the reaction adenosine(1518)/adenosine(1519) in 16S rRNA + 4 S-adenosyl-L-methionine = N(6)-dimethyladenosine(1518)/N(6)-dimethyladenosine(1519) in 16S rRNA + 4 S-adenosyl-L-homocysteine + 4 H(+). Functionally, specifically dimethylates two adjacent adenosines (A1518 and A1519) in the loop of a conserved hairpin near the 3'-end of 16S rRNA in the 30S particle. May play a critical role in biogenesis of 30S subunits. This chain is Ribosomal RNA small subunit methyltransferase A, found in Tolumonas auensis (strain DSM 9187 / NBRC 110442 / TA 4).